The following is a 271-amino-acid chain: ATP synthase subunit delta (271 aa).

It belongs to the ATPase delta chain family. In terms of assembly, F-type ATPases have 2 components, F(1) - the catalytic core - and F(0) - the membrane proton channel. F(1) has five subunits: alpha(3), beta(3), gamma(1), delta(1), epsilon(1). F(0) has three main subunits: a(1), b(2) and c(10-14). The alpha and beta chains form an alternating ring which encloses part of the gamma chain. F(1) is attached to F(0) by a central stalk formed by the gamma and epsilon chains, while a peripheral stalk is formed by the delta and b chains.

It is found in the cell membrane. Its function is as follows. F(1)F(0) ATP synthase produces ATP from ADP in the presence of a proton or sodium gradient. F-type ATPases consist of two structural domains, F(1) containing the extramembraneous catalytic core and F(0) containing the membrane proton channel, linked together by a central stalk and a peripheral stalk. During catalysis, ATP synthesis in the catalytic domain of F(1) is coupled via a rotary mechanism of the central stalk subunits to proton translocation. Functionally, this protein is part of the stalk that links CF(0) to CF(1). It either transmits conformational changes from CF(0) to CF(1) or is implicated in proton conduction. The polypeptide is ATP synthase subunit delta (Corynebacterium aurimucosum (strain ATCC 700975 / DSM 44827 / CIP 107346 / CN-1) (Corynebacterium nigricans)).